A 212-amino-acid polypeptide reads, in one-letter code: Uridine kinase (212 aa).

13–20 (GGSGSGKT) serves as a coordination point for ATP.

This sequence belongs to the uridine kinase family.

It is found in the cytoplasm. The catalysed reaction is uridine + ATP = UMP + ADP + H(+). The enzyme catalyses cytidine + ATP = CMP + ADP + H(+). It participates in pyrimidine metabolism; CTP biosynthesis via salvage pathway; CTP from cytidine: step 1/3. Its pathway is pyrimidine metabolism; UMP biosynthesis via salvage pathway; UMP from uridine: step 1/1. The sequence is that of Uridine kinase from Bacillus cytotoxicus (strain DSM 22905 / CIP 110041 / 391-98 / NVH 391-98).